Consider the following 724-residue polypeptide: Ribosomal protein S6 kinase alpha-1 (724 aa).

Position 54 is a phosphoserine (Ser-54). The Protein kinase 1 domain occupies 62 to 310 (FELLKVLGQG…AEEIKRHIFY (249 aa)). ATP-binding positions include 68 to 76 (LGQGSFGKV) and Lys-94. Asp-187 serves as the catalytic Proton acceptor. Phosphoserine; by PDPK1 is present on Ser-221. Ser-296 bears the Phosphoserine mark. The region spanning 311 to 380 (STIDWNKLYR…VATGLMEDDG (70 aa)) is the AGC-kinase C-terminal domain. Thr-348 bears the Phosphothreonine mark. Ser-352, Ser-358, and Ser-369 each carry phosphoserine. The region spanning 407–664 (YVVKETIGVG…AKQVLQHPWI (258 aa)) is the Protein kinase 2 domain. ATP is bound by residues 413-421 (IGVGSYSVC) and Lys-436. Asp-524 (proton acceptor) is an active-site residue. Residue Thr-562 is modified to Phosphothreonine. Position 721 is a phosphoserine (Ser-721).

Belongs to the protein kinase superfamily. AGC Ser/Thr protein kinase family. S6 kinase subfamily. Forms a complex with either MAPK1/ERK2 or MAPK3/ERK1 in quiescent cells. Transiently dissociates following mitogenic stimulation. Interacts with ETV1/ER81 and FGFR1. It depends on Mg(2+) as a cofactor. In terms of processing, activated by phosphorylation at Ser-221 by PDPK1. Autophosphorylated on Ser-369, as part of the activation process. May be phosphorylated at Thr-348 and Ser-352 by MAPK1/ERK2 and MAPK3/ERK1. Post-translationally, N-terminal myristoylation results in an activated kinase in the absence of added growth factors. As to expression, intestine, thymus, and lung.

It localises to the nucleus. It is found in the cytoplasm. The enzyme catalyses L-seryl-[protein] + ATP = O-phospho-L-seryl-[protein] + ADP + H(+). It carries out the reaction L-threonyl-[protein] + ATP = O-phospho-L-threonyl-[protein] + ADP + H(+). With respect to regulation, upon extracellular signal or mitogen stimulation, phosphorylated at Thr-562 in the C-terminal kinase domain (CTKD) by MAPK1/ERK2 and MAPK3/ERK1. The activated CTKD then autophosphorylates Ser-369, allowing binding of PDPK1, which in turn phosphorylates Ser-221 in the N-terminal kinase domain (NTDK) leading to the full activation of the protein and subsequent phosphorylation of the substrates by the NTKD. Functionally, serine/threonine-protein kinase that acts downstream of ERK (MAPK1/ERK2 and MAPK3/ERK1) signaling and mediates mitogenic and stress-induced activation of the transcription factors CREB1, ETV1/ER81 and NR4A1/NUR77, regulates translation through RPS6 and EIF4B phosphorylation, and mediates cellular proliferation, survival, and differentiation by modulating mTOR signaling and repressing pro-apoptotic function of BAD and DAPK1. In fibroblast, is required for EGF-stimulated phosphorylation of CREB1, which results in the subsequent transcriptional activation of several immediate-early genes. In response to mitogenic stimulation (EGF and PMA), phosphorylates and activates NR4A1/NUR77 and ETV1/ER81 transcription factors and the cofactor CREBBP. Upon insulin-derived signal, acts indirectly on the transcription regulation of several genes by phosphorylating GSK3B at 'Ser-9' and inhibiting its activity. Phosphorylates RPS6 in response to serum or EGF via an mTOR-independent mechanism and promotes translation initiation by facilitating assembly of the pre-initiation complex. In response to insulin, phosphorylates EIF4B, enhancing EIF4B affinity for the EIF3 complex and stimulating cap-dependent translation. Is involved in the mTOR nutrient-sensing pathway by directly phosphorylating TSC2 at 'Ser-1798', which potently inhibits TSC2 ability to suppress mTOR signaling, and mediates phosphorylation of RPTOR, which regulates mTORC1 activity and may promote rapamycin-sensitive signaling independently of the PI3K/AKT pathway. Also involved in feedback regulation of mTORC1 and mTORC2 by phosphorylating DEPTOR. Mediates cell survival by phosphorylating the pro-apoptotic proteins BAD and DAPK1 and suppressing their pro-apoptotic function. Promotes the survival of hepatic stellate cells by phosphorylating CEBPB in response to the hepatotoxin carbon tetrachloride (CCl4). Mediates induction of hepatocyte prolifration by TGFA through phosphorylation of CEBPB. Is involved in cell cycle regulation by phosphorylating the CDK inhibitor CDKN1B, which promotes CDKN1B association with 14-3-3 proteins and prevents its translocation to the nucleus and inhibition of G1 progression. Phosphorylates EPHA2 at 'Ser-897', the RPS6KA-EPHA2 signaling pathway controls cell migration. In response to mTORC1 activation, phosphorylates EIF4B at 'Ser-406' and 'Ser-422' which stimulates bicarbonate cotransporter SLC4A7 mRNA translation, increasing SLC4A7 protein abundance and function. This chain is Ribosomal protein S6 kinase alpha-1 (Rps6ka1), found in Mus musculus (Mouse).